A 418-amino-acid polypeptide reads, in one-letter code: Glutamyl-tRNA reductase (418 aa).

Substrate is bound by residues 49–52 (TCNR), serine 109, 114–116 (EPQ), and glutamine 120. Residue cysteine 50 is the Nucleophile of the active site. 189 to 194 (GAGETI) lines the NADP(+) pocket.

The protein belongs to the glutamyl-tRNA reductase family. In terms of assembly, homodimer.

It carries out the reaction (S)-4-amino-5-oxopentanoate + tRNA(Glu) + NADP(+) = L-glutamyl-tRNA(Glu) + NADPH + H(+). It functions in the pathway porphyrin-containing compound metabolism; protoporphyrin-IX biosynthesis; 5-aminolevulinate from L-glutamyl-tRNA(Glu): step 1/2. Catalyzes the NADPH-dependent reduction of glutamyl-tRNA(Glu) to glutamate 1-semialdehyde (GSA). The protein is Glutamyl-tRNA reductase of Citrobacter koseri (strain ATCC BAA-895 / CDC 4225-83 / SGSC4696).